The following is a 498-amino-acid chain: Glutamate--tRNA ligase (498 aa).

Positions 10–20 (PSPTGYFHIGG) match the 'HIGH' region motif. The short motif at 252–256 (KLSKR) is the 'KMSKS' region element. Residue lysine 255 participates in ATP binding.

This sequence belongs to the class-I aminoacyl-tRNA synthetase family. Glutamate--tRNA ligase type 1 subfamily. As to quaternary structure, monomer.

The protein resides in the cytoplasm. It carries out the reaction tRNA(Glu) + L-glutamate + ATP = L-glutamyl-tRNA(Glu) + AMP + diphosphate. Catalyzes the attachment of glutamate to tRNA(Glu) in a two-step reaction: glutamate is first activated by ATP to form Glu-AMP and then transferred to the acceptor end of tRNA(Glu). This is Glutamate--tRNA ligase from Mycoplasmoides gallisepticum (strain R(low / passage 15 / clone 2)) (Mycoplasma gallisepticum).